The chain runs to 294 residues: MYNAEKKQPTYWQRLKIAFQYVMPQLYLTLAAGWLAKQKWGSVTHFIIKLFAKKYRVNMQEAEKTEFKDYASFNEFFIRPLKADARKIDENPTALCLPADGRISQYGHIEQQTLLQAKGHSFSLVDLLAGDTELAKEFEHGEFATIYLSPRDYHRVHMPCDATLRKMIYVPGDLFSVNPFLNEHIPNLLARNERVICVFDTEFGTMVQILVGATITASMSTVWAGIINPPRSAEVKEWTYSGESAVQLRKGQEMGAFQLGSTVINLFQADKVELANHLDVGVPVRVGEVLAYKK.

Active-site charge relay system; for autoendoproteolytic cleavage activity residues include Asp-100, His-157, and Ser-261. Ser-261 functions as the Schiff-base intermediate with substrate; via pyruvic acid; for decarboxylase activity in the catalytic mechanism. Pyruvic acid (Ser); by autocatalysis is present on Ser-261.

Belongs to the phosphatidylserine decarboxylase family. PSD-B subfamily. Prokaryotic type I sub-subfamily. As to quaternary structure, heterodimer of a large membrane-associated beta subunit and a small pyruvoyl-containing alpha subunit. The cofactor is pyruvate. Is synthesized initially as an inactive proenzyme. Formation of the active enzyme involves a self-maturation process in which the active site pyruvoyl group is generated from an internal serine residue via an autocatalytic post-translational modification. Two non-identical subunits are generated from the proenzyme in this reaction, and the pyruvate is formed at the N-terminus of the alpha chain, which is derived from the carboxyl end of the proenzyme. The autoendoproteolytic cleavage occurs by a canonical serine protease mechanism, in which the side chain hydroxyl group of the serine supplies its oxygen atom to form the C-terminus of the beta chain, while the remainder of the serine residue undergoes an oxidative deamination to produce ammonia and the pyruvoyl prosthetic group on the alpha chain. During this reaction, the Ser that is part of the protease active site of the proenzyme becomes the pyruvoyl prosthetic group, which constitutes an essential element of the active site of the mature decarboxylase.

It localises to the cell membrane. It carries out the reaction a 1,2-diacyl-sn-glycero-3-phospho-L-serine + H(+) = a 1,2-diacyl-sn-glycero-3-phosphoethanolamine + CO2. The protein operates within phospholipid metabolism; phosphatidylethanolamine biosynthesis; phosphatidylethanolamine from CDP-diacylglycerol: step 2/2. Its function is as follows. Catalyzes the formation of phosphatidylethanolamine (PtdEtn) from phosphatidylserine (PtdSer). The polypeptide is Phosphatidylserine decarboxylase proenzyme (Histophilus somni (strain 129Pt) (Haemophilus somnus)).